A 379-amino-acid chain; its full sequence is GDP-mannose transporter 1 (379 aa).

Topologically, residues 1 to 39 (MTDNRKPEDYTIEMDKLGQNKNYQAPPPPPQPRSSTASS) are cytoplasmic. Positions 17–38 (LGQNKNYQAPPPPPQPRSSTAS) are disordered. A helical membrane pass occupies residues 40–60 (ISNNAALSVLAYCGSSILMTV). Topologically, residues 61-69 (MNKYVLSSD) are lumenal. The helical transmembrane segment at 70-90 (FNLNFFLLCVQSLVCIIAIQL) threads the bilayer. The Cytoplasmic portion of the chain corresponds to 91 to 110 (CKACGLITYRDFNLDEARKW). Residues 111–133 (FPITLLLIGMIYTGSKALQFLSI) form a helical membrane-spanning segment. The Lumenal segment spans residues 134-136 (PVY). A helical membrane pass occupies residues 137–156 (TIFKNLTIILIAYGEVLWFG). Over 157-162 (GSVTNL) the chain is Cytoplasmic. The chain crosses the membrane as a helical span at residues 163–182 (TLFSFGLMVFSSIIAAWADI). The Lumenal segment spans residues 183–198 (KHAIESSGDATSKVST). Residues 199-219 (LNAGYIWMLINCLCTSSYVLG) traverse the membrane as a helical segment. Residues 220–233 (MRKRIKLTNFKDFD) lie on the Cytoplasmic side of the membrane. Residues 234 to 254 (TMFYNNLLSIPVLIVCSGILE) traverse the membrane as a helical segment. Residues 255–272 (DWSPANVARNFPSADRNG) lie on the Lumenal side of the membrane. A helical membrane pass occupies residues 273–293 (IMFAMILSGLSTVFISYTSAW). Residues 294-301 (CVRVTSST) are Cytoplasmic-facing. The helical transmembrane segment at 302–322 (TYSMVGALNKLPIALSGLIFF) threads the bilayer. Topologically, residues 323–325 (DAP) are lumenal. A helical membrane pass occupies residues 326 to 346 (VTFPSVSAIMVGFVSGIVYAV). Topologically, residues 347 to 379 (AKIKQNAKPKVGILPTTNPVSASSQSMRDSLRS) are cytoplasmic.

Belongs to the TPT transporter family. SLC35D subfamily. As to quaternary structure, homooligomer.

The protein localises to the golgi apparatus membrane. It localises to the cytoplasmic vesicle membrane. It is found in the endoplasmic reticulum membrane. Involved in the import of GDP-mannose from the cytoplasm into the Golgi lumen. The polypeptide is GDP-mannose transporter 1 (gmt1) (Emericella nidulans (strain FGSC A4 / ATCC 38163 / CBS 112.46 / NRRL 194 / M139) (Aspergillus nidulans)).